An 85-amino-acid polypeptide reads, in one-letter code: U4-theraphotoxin-Hhn1i (85 aa).

The N-terminal stretch at 1-22 is a signal peptide; the sequence is MKVTLIAILTCAAVLVLHTTAA. A propeptide spanning residues 23 to 48 is cleaved from the precursor; it reads EELEAESQLMEVGMPDTELAAVDEER. Disulfide bonds link Cys52-Cys66, Cys56-Cys77, and Cys71-Cys82.

The protein belongs to the neurotoxin 12 (Hwtx-2) family. 02 (Hwtx-2) subfamily. As to expression, expressed by the venom gland.

It is found in the secreted. In terms of biological role, postsynaptic neurotoxin. The polypeptide is U4-theraphotoxin-Hhn1i (Cyriopagopus hainanus (Chinese bird spider)).